The sequence spans 331 residues: Homeobox protein DBX1 (331 aa).

Disordered stretches follow at residues 56–94 (RAVP…ISSN) and 232–331 (KERE…ITVS). A DNA-binding region (homeobox) is located at residues 173–232 (GMLRRAVFSDVQRKALEKMFQKQKYISKPDRKKLAGKLGLKDSQVKIWFQNRRMKWRNSK). Positions 256–266 (DLSDVSKKSSG) are enriched in basic and acidic residues. Positions 299-314 (PSSPFNSSSASKPSDF) are enriched in low complexity. Residues 315–331 (SDSEEEGGEQEEEITVS) are compositionally biased toward acidic residues.

This sequence belongs to the H2.0 homeobox family.

The protein resides in the nucleus. May function within the midpoint progenitor population to inhibit neuronal differentiation, possibly through modulating the function of Xash3. The sequence is that of Homeobox protein DBX1 (dbx1) from Xenopus laevis (African clawed frog).